The primary structure comprises 706 residues: SPX domain-containing membrane protein OsI_32082 (706 aa).

One can recognise an SPX domain in the interval 2–145; that stretch reads VNFSNKLTKD…GYKFTDYYVR (144 aa). 6 consecutive transmembrane segments (helical) span residues 251–271, 281–301, 318–338, 340–359, 378–398, and 414–434; these read MSLVLNLANTFLYMVNTYIVV, LGAAATACGAVIGSMAVAQVF, LLFSSVVLLLGNVMYAMAFDL, SLTILLLGRVLCGMGSARAV, AAFVSASALGMACGPALAGLL, and LPGWIMAFGWLVYLIWLWISF. Residues 475–498 form a disordered region; the sequence is SEQDEEDDNGDEEHNETLSSSTTT. Acidic residues predominate over residues 476–488; it reads EQDEEDDNGDEEH. 5 helical membrane-spanning segments follow: residues 520–540, 554–574, 583–603, 611–631, and 678–698; these read LLIYFMLKYAMEILLAESSVV, VFLAVLGLSVLPVNAIVGTYI, ILVASEMALLAGVMLSFKLTV, VCSAVLTFVSAEVVEGVNLSL, and LLNATLLPALLVCVASIAATL.

This sequence belongs to the major facilitator superfamily.

It is found in the membrane. The sequence is that of SPX domain-containing membrane protein OsI_32082 from Oryza sativa subsp. indica (Rice).